The chain runs to 85 residues: Makatoxin-2 (85 aa).

Positions 1–19 (MNYLIVISFALLLMTSVES) are cleaved as a signal peptide. The LCN-type CS-alpha/beta domain occupies 21–83 (RDAYIADSEN…VPIRIPGPCR (63 aa)). 4 disulfide bridges follow: cysteine 31–cysteine 82, cysteine 35–cysteine 55, cysteine 41–cysteine 65, and cysteine 45–cysteine 67.

It belongs to the long (4 C-C) scorpion toxin superfamily. Sodium channel inhibitor family. Alpha subfamily. Expressed by the venom gland.

The protein localises to the secreted. Functionally, this protein markedly relaxes the rat carbachol-precontracted anococcygeus muscle. This relaxation is inhibited by the inhibitor of nitric oxide (NO) synthase, N-nitro-L-arginine methyl ester (L-NAME), suggesting that the response induced by this protein is NO-mediated. This Olivierus martensii (Manchurian scorpion) protein is Makatoxin-2.